A 154-amino-acid polypeptide reads, in one-letter code: Large-conductance mechanosensitive channel (154 aa).

2 helical membrane passes run 14–34 and 86–106; these read VVDL…VNSL and VFIN…FFVV.

It belongs to the MscL family. In terms of assembly, homopentamer.

It localises to the cell membrane. Its function is as follows. Channel that opens in response to stretch forces in the membrane lipid bilayer. May participate in the regulation of osmotic pressure changes within the cell. This Dehalococcoides mccartyi (strain ATCC BAA-2100 / JCM 16839 / KCTC 5957 / BAV1) protein is Large-conductance mechanosensitive channel.